The primary structure comprises 137 residues: Large ribosomal subunit protein uL16 (137 aa).

It belongs to the universal ribosomal protein uL16 family. In terms of assembly, part of the 50S ribosomal subunit.

In terms of biological role, binds 23S rRNA and is also seen to make contacts with the A and possibly P site tRNAs. The chain is Large ribosomal subunit protein uL16 from Streptococcus sanguinis (strain SK36).